The following is a 216-amino-acid chain: Large ribosomal subunit protein bL25 (216 aa).

The interval 191 to 216 (LVSAESEEDEDAPAADEVPATEVSEE) is disordered. The segment covering 195-204 (ESEEDEDAPA) has biased composition (acidic residues).

This sequence belongs to the bacterial ribosomal protein bL25 family. CTC subfamily. In terms of assembly, part of the 50S ribosomal subunit; part of the 5S rRNA/L5/L18/L25 subcomplex. Contacts the 5S rRNA. Binds to the 5S rRNA independently of L5 and L18.

Its function is as follows. This is one of the proteins that binds to the 5S RNA in the ribosome where it forms part of the central protuberance. The sequence is that of Large ribosomal subunit protein bL25 from Jannaschia sp. (strain CCS1).